Reading from the N-terminus, the 251-residue chain is tRNA (guanine-N(1)-)-methyltransferase (251 aa).

S-adenosyl-L-methionine-binding positions include glycine 113 and 133-138 (IGDYVL).

It belongs to the RNA methyltransferase TrmD family. In terms of assembly, homodimer.

It is found in the cytoplasm. It carries out the reaction guanosine(37) in tRNA + S-adenosyl-L-methionine = N(1)-methylguanosine(37) in tRNA + S-adenosyl-L-homocysteine + H(+). In terms of biological role, specifically methylates guanosine-37 in various tRNAs. The chain is tRNA (guanine-N(1)-)-methyltransferase from Pectobacterium carotovorum subsp. carotovorum (strain PC1).